The sequence spans 664 residues: Two-component response regulator ARR2 (664 aa).

Positions 1–21 (MVNPGHGRGPDSGTAAGGSNS) are disordered. Positions 29 to 144 (RVLVVDDDPT…ALKNIWQHVV (116 aa)) constitute a Response regulatory domain. Aspartate 80 carries the post-translational modification 4-aspartylphosphate. The tract at residues 151–215 (WNVSEHSGGS…DDKEDSSSLK (65 aa)) is disordered. Residues 165 to 178 (GGDRDRQQQHREDA) show a composition bias toward basic and acidic residues. Residues 180–191 (NNSSSVNEGNGR) show a composition bias toward polar residues. Residues 200 to 209 (EVDDQGDDKE) show a composition bias toward acidic residues. A Nuclear localization signal motif is present at residues 215 to 218 (KKPR). Positions 218-268 (RVVWSVELHQQFVAAVNQLGVDKAVPKKILEMMNVPGLTRENVASHLQKYR) form a DNA-binding region, myb-like GARP. Over residues 554 to 567 (AAFSTSEAYSSSST) the composition is skewed to low complexity. The disordered stretch occupies residues 554–589 (AAFSTSEAYSSSSTQRKRRETDATVVGEHGQNLQSP).

This sequence belongs to the ARR family. Type-B subfamily. In terms of assembly, binds the target DNA as a monomer. Interacts with histidine-containing phosphotransfer proteins. In terms of processing, two-component system major event consists of a His-to-Asp phosphorelay between a sensor histidine kinase (HK) and a response regulator (RR). In plants, the His-to-Asp phosphorelay involves an additional intermediate named Histidine-containing phosphotransfer protein (HPt). This multistep phosphorelay consists of a His-Asp-His-Asp sequential transfer of a phosphate group between first a His and an Asp of the HK protein, followed by the transfer to a conserved His of the HPt protein and finally the transfer to an Asp in the receiver domain of the RR protein. Phosphorylated in response to cytokinin mediated by AHK3. Detected in the whole plant. Predominantly expressed in pollen.

The protein resides in the nucleus. Functionally, transcriptional activator that binds specifically to the DNA sequence 5'-[AG]GATT-3'. Functions as a response regulator involved in His-to-Asp phosphorelay signal transduction system. Phosphorylation of the Asp residue in the receiver domain activates the ability of the protein to promote the transcription of target genes. Could directly activate some type-A response regulators in response to cytokinins. Involved in the expression of nuclear genes for components of mitochondrial complex I. Promotes cytokinin-mediated leaf longevity. Involved in the ethylene signaling pathway in an ETR1-dependent manner and in the cytokinin signaling pathway. The sequence is that of Two-component response regulator ARR2 (ARR2) from Arabidopsis thaliana (Mouse-ear cress).